We begin with the raw amino-acid sequence, 68 residues long: MDQVMQFVEPSRQFVKDSIRLVKRCTKPDRKEFQKVAMATAIGFAIMGFIGFFVKLIHIPINNIIVGG.

At 1-32 the chain is on the cytoplasmic side; the sequence is MDQVMQFVEPSRQFVKDSIRLVKRCTKPDRKE. Residues 33 to 61 traverse the membrane as a helical segment; sequence FQKVAMATAIGFAIMGFIGFFVKLIHIPI. Over 62-68 the chain is Extracellular; sequence NNIIVGG.

The protein belongs to the SecE/SEC61-gamma family. In terms of assembly, the SEC61 channel-forming translocon complex consists of channel-forming core components SEC61A1, SEC61B and SEC61G and different auxiliary components such as SEC62 and SEC63. The SEC61 channel associates with the multi-pass translocon (MPT) complex.

It is found in the endoplasmic reticulum membrane. Its function is as follows. Component of SEC61 channel-forming translocon complex that mediates transport of signal peptide-containing precursor polypeptides across the endoplasmic reticulum (ER). Forms a ribosome receptor and a gated pore in the ER membrane, both functions required for cotranslational translocation of nascent polypeptides. The SEC61 channel is also involved in ER membrane insertion of transmembrane proteins: it mediates membrane insertion of the first few transmembrane segments of proteins, while insertion of subsequent transmembrane regions of multi-pass membrane proteins is mediated by the multi-pass translocon (MPT) complex. This is Protein transport protein Sec61 subunit gamma (sec61g) from Harpagifer antarcticus (Antarctic spiny plunderfish).